We begin with the raw amino-acid sequence, 173 residues long: Sialic acid TRAP transporter small permease protein SiaQ (173 aa).

4 consecutive transmembrane segments (helical) span residues 13 to 33 (IEEI…TWQI), 46 to 66 (SEEL…AIAI), 87 to 107 (LSLV…IIVL), and 123 to 143 (LGIS…FMVF).

This sequence belongs to the TRAP transporter small permease family. The complex comprises the extracytoplasmic solute receptor protein SiaP, and the two transmembrane proteins SiaQ and SiaM. SiaQ and SiaM form a tight 1:1 complex.

It localises to the cell inner membrane. Part of the tripartite ATP-independent periplasmic (TRAP) transport system SiaPQM that catalyzes unidirectional Na(+)-dependent sialic acid uptake. The polypeptide is Sialic acid TRAP transporter small permease protein SiaQ (Vibrio cholerae serotype O1 (strain ATCC 39315 / El Tor Inaba N16961)).